The following is a 569-amino-acid chain: Protein THEMIS3 (569 aa).

CABIT stretches follow at residues 1-254 (MEQT…ARLD) and 255-523 (RKPR…EERS).

This sequence belongs to the themis family. Specifically expressed in the intestine.

This chain is Protein THEMIS3 (Themis3), found in Mus musculus (Mouse).